The primary structure comprises 239 residues: Ribonuclease PH (239 aa).

Phosphate contacts are provided by residues Arg86 and 124 to 126 (GTR).

This sequence belongs to the RNase PH family. In terms of assembly, homohexameric ring arranged as a trimer of dimers.

The catalysed reaction is tRNA(n+1) + phosphate = tRNA(n) + a ribonucleoside 5'-diphosphate. Its function is as follows. Phosphorolytic 3'-5' exoribonuclease that plays an important role in tRNA 3'-end maturation. Removes nucleotide residues following the 3'-CCA terminus of tRNAs; can also add nucleotides to the ends of RNA molecules by using nucleoside diphosphates as substrates, but this may not be physiologically important. Probably plays a role in initiation of 16S rRNA degradation (leading to ribosome degradation) during starvation. The protein is Ribonuclease PH of Rhizobium johnstonii (strain DSM 114642 / LMG 32736 / 3841) (Rhizobium leguminosarum bv. viciae).